The primary structure comprises 539 residues: Dihydrolipoyllysine-residue acetyltransferase component 2 of pyruvate dehydrogenase complex, mitochondrial (539 aa).

A mitochondrion-targeting transit peptide spans 1–102 (MASRIINHSK…SSQMRSVRGF (102 aa)). The interval 102–122 (FSSSSDLPPHQEIGMPSLSPT) is disordered. The Lipoyl-binding domain occupies 111 to 187 (HQEIGMPSLS…QVGEVIAITV (77 aa)). Lys-152 is modified (N6-lipoyllysine). Positions 196–244 (FKDYTPSSDTGPAAPEAKPAPSLPKEEKVEKPASAPEAKISKPSSAPSE) are disordered. One can recognise a Peripheral subunit-binding (PSBD) domain in the interval 248–285 (FASPLARKLAEDNNVPLSSIKGTGPEGRIVKADVEDFL). Catalysis depends on residues His-512 and Asp-516.

This sequence belongs to the 2-oxoacid dehydrogenase family. (R)-lipoate is required as a cofactor.

It localises to the mitochondrion matrix. It catalyses the reaction N(6)-[(R)-dihydrolipoyl]-L-lysyl-[protein] + acetyl-CoA = N(6)-[(R)-S(8)-acetyldihydrolipoyl]-L-lysyl-[protein] + CoA. The pyruvate dehydrogenase complex catalyzes the overall conversion of pyruvate to acetyl-CoA and CO(2). It contains multiple copies of three enzymatic components: pyruvate dehydrogenase (E1), dihydrolipoamide acetyltransferase (E2) and lipoamide dehydrogenase (E3). The sequence is that of Dihydrolipoyllysine-residue acetyltransferase component 2 of pyruvate dehydrogenase complex, mitochondrial from Arabidopsis thaliana (Mouse-ear cress).